Reading from the N-terminus, the 29-residue chain is Potassium channel toxin alpha-KTx 8.4 (29 aa).

3 disulfide bridges follow: Cys-3-Cys-19, Cys-6-Cys-24, and Cys-10-Cys-26.

It belongs to the short scorpion toxin superfamily. Potassium channel inhibitor family. Alpha-KTx 08 subfamily. Expressed by the venom gland.

It is found in the secreted. Functionally, inhibits voltage-gated potassium channels. This Leiurus hebraeus (Hebrew deathstalker scorpion) protein is Potassium channel toxin alpha-KTx 8.4.